The primary structure comprises 132 residues: Subtelomeric hrmA-associated cluster protein AFUB_079000 (132 aa).

Its function is as follows. Part of the subtelomeric hrmA-associated cluster (HAC) containing genes that alter the hyphal surface (such as reduced total chitin or increased beta-glucan exposure) and perturb inter-hyphal interactions within the developing biofilms, resulting in a loss of vertically aligned polarized growing filaments. Consequently, this hypoxia-typic morphotype (called H-MORPH) with altered biofilm architecture leads to increased hypoxia fitness, increased host inflammation, rapid disease progression, and mortality in a murine model of invasive aspergillosis. In Aspergillus fumigatus (strain CBS 144.89 / FGSC A1163 / CEA10) (Neosartorya fumigata), this protein is Subtelomeric hrmA-associated cluster protein AFUB_079000.